We begin with the raw amino-acid sequence, 188 residues long: Ribosome-recycling factor (188 aa).

Belongs to the RRF family.

It localises to the cytoplasm. Its function is as follows. Responsible for the release of ribosomes from messenger RNA at the termination of protein biosynthesis. May increase the efficiency of translation by recycling ribosomes from one round of translation to another. The protein is Ribosome-recycling factor of Lawsonia intracellularis (strain PHE/MN1-00).